We begin with the raw amino-acid sequence, 277 residues long: Undecaprenyl-diphosphatase (277 aa).

6 helical membrane-spanning segments follow: residues 47–67 (FNII…RGKI), 85–105 (VNLL…ADLI), 108–128 (WLFN…IMLW), 183–203 (AATE…AVYS), 218–238 (VFAV…RALL), and 249–269 (FAWY…FHLI).

This sequence belongs to the UppP family.

It localises to the cell inner membrane. The catalysed reaction is di-trans,octa-cis-undecaprenyl diphosphate + H2O = di-trans,octa-cis-undecaprenyl phosphate + phosphate + H(+). Its function is as follows. Catalyzes the dephosphorylation of undecaprenyl diphosphate (UPP). Confers resistance to bacitracin. The chain is Undecaprenyl-diphosphatase from Pseudomonas paraeruginosa (strain DSM 24068 / PA7) (Pseudomonas aeruginosa (strain PA7)).